The following is a 362-amino-acid chain: tRNA-specific 2-thiouridylase MnmA 1 (362 aa).

ATP-binding positions include 12–19 and Met38; that span reads GMSGGVDS. The active-site Nucleophile is the Cys104. A disulfide bridge links Cys104 with Cys200. Gly128 lines the ATP pocket. Positions 150–152 are interaction with tRNA; the sequence is KDQ. Cys200 acts as the Cysteine persulfide intermediate in catalysis. The interaction with tRNA stretch occupies residues 306-307; sequence RY.

The protein belongs to the MnmA/TRMU family.

It is found in the cytoplasm. It carries out the reaction S-sulfanyl-L-cysteinyl-[protein] + uridine(34) in tRNA + AH2 + ATP = 2-thiouridine(34) in tRNA + L-cysteinyl-[protein] + A + AMP + diphosphate + H(+). Its function is as follows. Catalyzes the 2-thiolation of uridine at the wobble position (U34) of tRNA, leading to the formation of s(2)U34. In Clostridium tetani (strain Massachusetts / E88), this protein is tRNA-specific 2-thiouridylase MnmA 1.